A 288-amino-acid polypeptide reads, in one-letter code: Bis(5'-nucleosyl)-tetraphosphatase, symmetrical (288 aa).

This sequence belongs to the Ap4A hydrolase family.

The enzyme catalyses P(1),P(4)-bis(5'-adenosyl) tetraphosphate + H2O = 2 ADP + 2 H(+). In terms of biological role, hydrolyzes diadenosine 5',5'''-P1,P4-tetraphosphate to yield ADP. This is Bis(5'-nucleosyl)-tetraphosphatase, symmetrical from Pseudomonas putida (strain W619).